Consider the following 106-residue polypeptide: MIFFAAAAIGNIYFQQIYSLPIRVIGMAIALVIAFILAAITNQGTKARAFFNDSRTEARKVVWPTRAEARQTTLIVIGVTMIASLFFWAVDSIIVTVINFLTDLRF.

A run of 2 helical transmembrane segments spans residues 20 to 40 (LPIRVIGMAIALVIAFILAAI) and 75 to 95 (IVIGVTMIASLFFWAVDSIIV).

The protein belongs to the SecE/SEC61-gamma family. As to quaternary structure, component of the Sec protein translocase complex. Heterotrimer consisting of SecY, SecE and SecG subunits. The heterotrimers can form oligomers, although 1 heterotrimer is thought to be able to translocate proteins. Interacts with the ribosome. Interacts with SecDF, and other proteins may be involved. Interacts with SecA.

The protein resides in the cell inner membrane. Essential subunit of the Sec protein translocation channel SecYEG. Clamps together the 2 halves of SecY. May contact the channel plug during translocation. The polypeptide is Protein translocase subunit SecE (Haemophilus influenzae (strain ATCC 51907 / DSM 11121 / KW20 / Rd)).